We begin with the raw amino-acid sequence, 361 residues long: Chorismate synthase (361 aa).

Basic and acidic residues predominate over residues 40–49 (DLQHDLDRRR). The interval 40–60 (DLQHDLDRRRPGTSRHTTQRR) is disordered. Residues Arg48 and Arg54 each coordinate NADP(+). FMN contacts are provided by residues 125 to 127 (RSS), 237 to 238 (NA), Gly277, 292 to 296 (KPTSS), and Arg318.

It belongs to the chorismate synthase family. As to quaternary structure, homotetramer. The cofactor is FMNH2.

It carries out the reaction 5-O-(1-carboxyvinyl)-3-phosphoshikimate = chorismate + phosphate. It participates in metabolic intermediate biosynthesis; chorismate biosynthesis; chorismate from D-erythrose 4-phosphate and phosphoenolpyruvate: step 7/7. Functionally, catalyzes the anti-1,4-elimination of the C-3 phosphate and the C-6 proR hydrogen from 5-enolpyruvylshikimate-3-phosphate (EPSP) to yield chorismate, which is the branch point compound that serves as the starting substrate for the three terminal pathways of aromatic amino acid biosynthesis. This reaction introduces a second double bond into the aromatic ring system. This is Chorismate synthase from Chromohalobacter salexigens (strain ATCC BAA-138 / DSM 3043 / CIP 106854 / NCIMB 13768 / 1H11).